The primary structure comprises 312 residues: Taste receptor type 2 member 135 (312 aa).

Residues 1–19 (MSTGHTVLGCQTTDKTVVT) lie on the Extracellular side of the membrane. Residues 20–40 (LFIILVLLCLVAVVGNGFIII) traverse the membrane as a helical segment. Topologically, residues 41-66 (ALGMKWLLRRTLSAHNKLLISLAASR) are cytoplasmic. A helical transmembrane segment spans residues 67–87 (FCLQCVVIGKNIYVFLNPTSF). At 88–97 (PYNPVIQLLN) the chain is on the extracellular side. A helical transmembrane segment spans residues 98–118 (LMWDFLTAATIWLCSLLGFFY). Over 119 to 140 (CVKIATLTHPVFVWLKYRLPGW) the chain is Cytoplasmic. A helical membrane pass occupies residues 141–161 (VPWMLLSAVGMSSLTSILCFI). Residues 162–198 (GNYMIYQNHAKSGHQPWNVTGNSLRHSLEKFYFFSIK) lie on the Extracellular side of the membrane. Asparagine 179 carries N-linked (GlcNAc...) asparagine glycosylation. The helical transmembrane segment at 199-219 (IIMWTIPTVVFSIFMSLLLVS) threads the bilayer. Topologically, residues 220–244 (LVRHMKKTFLALSELRDVWAQAHFK) are cytoplasmic. The helical transmembrane segment at 245-265 (ALLPLLSFIVLFISCFLTLVL) threads the bilayer. The Extracellular segment spans residues 266 to 277 (SSASNTPYQEFR). A helical transmembrane segment spans residues 278–298 (YWMWQVVIHLCTVIHPIVILF). The Cytoplasmic segment spans residues 299–312 (SNPVLRVVIKRGCC).

This sequence belongs to the G-protein coupled receptor T2R family.

It localises to the membrane. In terms of biological role, putative taste receptor which may play a role in the perception of bitterness. In Mus musculus (Mouse), this protein is Taste receptor type 2 member 135 (Tas2r135).